The primary structure comprises 90 residues: Probable Fe(2+)-trafficking protein (90 aa).

The protein belongs to the Fe(2+)-trafficking protein family.

Its function is as follows. Could be a mediator in iron transactions between iron acquisition and iron-requiring processes, such as synthesis and/or repair of Fe-S clusters in biosynthetic enzymes. This is Probable Fe(2+)-trafficking protein from Laribacter hongkongensis (strain HLHK9).